A 413-amino-acid polypeptide reads, in one-letter code: Multifunctional CCA protein (413 aa).

Residues glycine 8 and arginine 11 each contribute to the ATP site. CTP-binding residues include glycine 8 and arginine 11. Mg(2+) contacts are provided by aspartate 21 and aspartate 23. 3 residues coordinate ATP: arginine 91, arginine 143, and arginine 146. 3 residues coordinate CTP: arginine 91, arginine 143, and arginine 146. In terms of domain architecture, HD spans threonine 232–leucine 333.

This sequence belongs to the tRNA nucleotidyltransferase/poly(A) polymerase family. Bacterial CCA-adding enzyme type 1 subfamily. In terms of assembly, monomer. Can also form homodimers and oligomers. It depends on Mg(2+) as a cofactor. Ni(2+) serves as cofactor.

The enzyme catalyses a tRNA precursor + 2 CTP + ATP = a tRNA with a 3' CCA end + 3 diphosphate. The catalysed reaction is a tRNA with a 3' CCA end + 2 CTP + ATP = a tRNA with a 3' CCACCA end + 3 diphosphate. Its function is as follows. Catalyzes the addition and repair of the essential 3'-terminal CCA sequence in tRNAs without using a nucleic acid template. Adds these three nucleotides in the order of C, C, and A to the tRNA nucleotide-73, using CTP and ATP as substrates and producing inorganic pyrophosphate. tRNA 3'-terminal CCA addition is required both for tRNA processing and repair. Also involved in tRNA surveillance by mediating tandem CCA addition to generate a CCACCA at the 3' terminus of unstable tRNAs. While stable tRNAs receive only 3'-terminal CCA, unstable tRNAs are marked with CCACCA and rapidly degraded. The protein is Multifunctional CCA protein of Burkholderia multivorans (strain ATCC 17616 / 249).